We begin with the raw amino-acid sequence, 449 residues long: Probable protoheme IX farnesyltransferase, mitochondrial (449 aa).

The segment covering 99-138 (TTSTTTTTNINENNIKNENNNENNNENSNNNNEQSIKSNQ) has biased composition (low complexity). The segment at 99-140 (TTSTTTTTNINENNIKNENNNENNNENSNNNNEQSIKSNQTK) is disordered. A run of 7 helical transmembrane segments spans residues 163-183 (LTAI…WVVL), 245-267 (MAVT…LYCW), 279-299 (TWIG…AATG), 303-323 (AIGM…FLAL), 352-372 (SLAH…FFNF), 374-394 (VHPI…LPFI), and 402-422 (LYII…LLRQ).

It belongs to the UbiA prenyltransferase family.

It localises to the mitochondrion membrane. Functionally, converts protoheme IX and farnesyl diphosphate to heme O. The polypeptide is Probable protoheme IX farnesyltransferase, mitochondrial (cox10) (Dictyostelium discoideum (Social amoeba)).